A 1248-amino-acid chain; its full sequence is Structural maintenance of chromosomes protein 1B (1248 aa).

32–39 (GPNGSGKS) is an ATP binding site. Residues 163 to 502 (EFIGEYEAKK…EGKRQQKRAE (340 aa)) adopt a coiled-coil conformation. Positions 514–629 (SVFGRLLDLC…ETVEEARHIA (116 aa)) constitute an SMC hinge domain. An N6-acetyllysine mark is found at Lys-648, Lys-713, and Lys-1032. A coiled-coil region spans residues 666–912 (WDEKELHNLR…REVGKLQKEV (247 aa)). A compositionally biased stretch (basic and acidic residues) spans 1219-1228 (PDTEDQEGSR). A disordered region spans residues 1219-1248 (PDTEDQEGSRSHRKPRVPRVSMSPKSPQSR).

It belongs to the SMC family. SMC1 subfamily. Forms a heterodimer with SMC3. Component of a meiosis-specific cohesin complex, probably composed of the SMC1B and SMC3 heterodimer attached via their SMC hinge domain, RAD21 (or its meiosis-specific related protein REC8), which link them, and STAG3, which interacts with RAD21 or REC8. The cohesin complex interacts with the cohesin loading complex subunits NIPBL/Scc2 (via HEAT repeats) and MAU2/Scc4. NIPBL directly contacts all members of the complex, RAD21, SMC1A/B, SMC3 and STAG1. Spermatocytes (at protein level). Testis and ovary specific. Not expressed in somatic cells.

Its subcellular location is the nucleus. The protein localises to the chromosome. It is found in the centromere. In terms of biological role, meiosis-specific component of cohesin complex. Required for the maintenance of meiotic cohesion, but not, or only to a minor extent, for its establishment. Contributes to axial element (AE) formation and the organization of chromatin loops along the AE. Plays a key role in synapsis, recombination and chromosome movements. The cohesin complex is required for the cohesion of sister chromatids after DNA replication. The cohesin complex apparently forms a large proteinaceous ring within which sister chromatids can be trapped. At anaphase, the complex is cleaved and dissociates from chromatin, allowing sister chromatids to segregate. The meiosis-specific cohesin complex probably replaces mitosis specific cohesin complex when it dissociates from chromatin during prophase I. The chain is Structural maintenance of chromosomes protein 1B (Smc1b) from Mus musculus (Mouse).